We begin with the raw amino-acid sequence, 351 residues long: Probable RNA methyltransferase BAV1540 (351 aa).

The active-site Proton acceptor is the glutamate 90. Residues 93–319 form the Radical SAM core domain; the sequence is LLPRDGLCVS…VKVRNSAGQD (227 aa). Residues cysteine 100 and cysteine 324 are joined by a disulfide bond. Residues cysteine 107, cysteine 111, and cysteine 114 each coordinate [4Fe-4S] cluster. S-adenosyl-L-methionine is bound by residues 152 to 153, serine 182, 205 to 207, and asparagine 281; these read GE and SLH. Cysteine 324 acts as the S-methylcysteine intermediate in catalysis.

This sequence belongs to the radical SAM superfamily. RlmN family. The cofactor is [4Fe-4S] cluster.

Its subcellular location is the cytoplasm. This is Probable RNA methyltransferase BAV1540 from Bordetella avium (strain 197N).